The chain runs to 873 residues: DNA mismatch repair protein PMS1 (873 aa).

The interval 1-357 (MTQIHQINDI…FKTTLSDYYN (357 aa)) is DNA- and ATP-binding. Over residues 379–402 (LKTEVFDDRSTTHESDNENYHTAR) the composition is skewed to basic and acidic residues. Residues 379–423 (LKTEVFDDRSTTHESDNENYHTARSESNQSNHAHFNSTTGVIDKS) are disordered. Ser393 is subject to Phosphoserine. Residues 403–423 (SESNQSNHAHFNSTTGVIDKS) show a composition bias toward polar residues. Position 566 is a phosphoserine (Ser566). Positions 661–873 (YLTLTVSKND…WSSFSKDYEI (213 aa)) are interaction with MLH1.

The protein belongs to the DNA mismatch repair MutL/HexB family. As to quaternary structure, heterodimer of MLH1 and PMS1, called MutLalpha, which is the major MMR MutL activity correcting base-base mismatches as well as IDLs. The heterodimer binds double strand DNA independently of a mismatch with positive cooperativity and has more than one DNA binding site. Forms a ternary complex with either the MSH2-MSH6 (MutSalpha) or the MSH2-MSH3 heterodimer (MutSbeta), which recognize and bind to mismatch DNA. Ternary complex formation is promoted by ATP binding.

Its subcellular location is the nucleus. Required for DNA mismatch repair (MMR), correcting base-base mismatches and insertion-deletion loops (IDLs) resulting from DNA replication, DNA damage or from recombination events between non-identical sequences during meiosis. Component of the MutLalpha heterodimer that forms a ternary complex with the MutS heterodimers, which initially recognize the DNA mismatches. This complex is thought to be responsible for directing the downstream MMR events, including strand discrimination, excision, and resynthesis. Plays a major role in maintaining the genetic stability of simple sequence repeats and in the repair of heteroduplex sites present in meiotic recombination intermediates. The chain is DNA mismatch repair protein PMS1 (PMS1) from Saccharomyces cerevisiae (strain ATCC 204508 / S288c) (Baker's yeast).